The following is a 423-amino-acid chain: Probable efflux pump mfs2 (423 aa).

The next 11 membrane-spanning stretches (helical) occupy residues 21–41 (TMALSVYLLATAFGPLIIGPV), 49–69 (SIFHITNIWFLVWNLVCGFAH), 79–99 (LLAGFGASAVYSLGYGVLGDV), 111–131 (LYLLIPLTGSAVGPIVSGFIV), 138–158 (WMFWSTAILQLTLDLSSLLFH), 220–240 (AILEGIDYGLLYFALSSFSAL), 256–278 (YIVICIGTVSGSQLCGPLMDYAY), 295–315 (IPLLLPGALITPIGFLLYGWA), 319–339 (HLIWVVVDVGAALLSLGMQIF), 360–380 (AATQVLRSLLAFAFPLFSNSL), and 392–411 (LLAFLSIGIALPATGILWRW).

This sequence belongs to the major facilitator superfamily.

The protein resides in the membrane. Its function is as follows. Probable efflux pump; part of the gene cluster 27 that mediates the biosynthesis of asparasone A, a sclerotium-specific anthraquinone pigment important for sclerotial survival. In Aspergillus flavus (strain ATCC 200026 / FGSC A1120 / IAM 13836 / NRRL 3357 / JCM 12722 / SRRC 167), this protein is Probable efflux pump mfs2.